Here is a 147-residue protein sequence, read N- to C-terminus: Protegrin-2 (147 aa).

The N-terminal stretch at 1–29 (METQRASLCLGRWSLWLLLLALVVPSASA) is a signal peptide. Residues 30 to 130 (QALSYREAVL…DITCNEVQGV (101 aa)) constitute a propeptide that is removed on maturation. Residues 61 to 80 (DQPPKADEDPGTPKPVSFTV) form a disordered region. Cystine bridges form between Cys85-Cys96, Cys107-Cys124, Cys136-Cys145, and Cys138-Cys143. Val146 bears the Valine amide mark.

This sequence belongs to the cathelicidin family.

The protein resides in the secreted. Functionally, microbicidal activity. Active against E.coli, Listeria monocytogenes and C.albicans, in vitro. The polypeptide is Protegrin-2 (NPG2) (Sus scrofa (Pig)).